The sequence spans 226 residues: MEANASVDMFSKVLENQLLQTTKLVEEHLDSEIQKLDQMDEDELERLKEKRLEALKKAQQQKQEWLSKGHGEYREIPSERDFFQEDKESKKVVCHFYRDSTFRCKILDRHLVILSKKHLETKFLKLNVEKAPFLCERLRIKVIPTLALVKDGKTQDFVVGFSDLGNTDDFTTETLEWRLGCSDILNYSGNLMEPPFQSQKKFGTNFTKLEKKTIRGKKYDSDSDDD.

One can recognise a Thioredoxin domain in the interval 52-180 (LEALKKAQQQ…TTETLEWRLG (129 aa)). Residues S188, S221, and S223 each carry the phosphoserine modification.

In terms of assembly, forms ternary complexes with the chaperonin TCP1 complex, spanning the cylindrical chaperonin cavity and contacting at least 2 subunits.

It is found in the cytoplasm. It localises to the nucleus. The protein resides in the cytoskeleton. The protein localises to the microtubule organizing center. Its subcellular location is the centrosome. It is found in the midbody. Its function is as follows. Significantly diminishes the chaperonin TCP1 complex ATPase activity, thus negatively impacts protein folding, including that of actin or tubulin. This chain is Thioredoxin domain-containing protein 9 (TXNDC9), found in Bos taurus (Bovine).